A 225-amino-acid polypeptide reads, in one-letter code: MSEDHFDEEHEGHGGGGGSRHPMAARFRGYLPVVVDVETGGFNSATDALLEIAAVTIGMDERGFVFPEHTYFFRVEPFVGANIEAAALEFTGIKLDHPLRMAVSEETAMNDIFRGVRKALKANGCKRAVLVGHNASFDLGFVNAAVARMDMKRNPFHPFSSFDTATLAGLAYGQTVLAKACQAAGIDFDGREAHSARYDTEKTAELFCGIVNRWKEMGGWEDFDD.

A disordered region spans residues 1-21; the sequence is MSEDHFDEEHEGHGGGGGSRH. In terms of domain architecture, Exonuclease spans 33–207; sequence VVVDVETGGF…YDTEKTAELF (175 aa). Mg(2+) is bound by residues Asp-36, Glu-38, His-194, and Asp-199. Residue His-194 is the Proton donor/acceptor of the active site.

This sequence belongs to the RNase T family. In terms of assembly, homodimer. The cofactor is Mg(2+).

In terms of biological role, trims short 3' overhangs of a variety of RNA species, leaving a one or two nucleotide 3' overhang. Responsible for the end-turnover of tRNA: specifically removes the terminal AMP residue from uncharged tRNA (tRNA-C-C-A). Also appears to be involved in tRNA biosynthesis. The protein is Ribonuclease T of Pseudomonas syringae pv. tomato (strain ATCC BAA-871 / DC3000).